The primary structure comprises 934 residues: DNA topoisomerase 1 (934 aa).

The segment at 1 to 20 (MADPKTKGRGSGGNGSGRRL) is disordered. Positions 18 to 142 (RRLVIVESPT…VKRMVFHEIT (125 aa)) constitute a Toprim domain. Positions 24 and 111 each coordinate Mg(2+). Positions 157–616 (DIDLVDAQET…FYFGGDHGVP (460 aa)) constitute a Topo IA-type catalytic domain. Residues 191-196 (SAGRVQ) are interaction with DNA. The O-(5'-phospho-DNA)-tyrosine intermediate role is filled by Y342. Disordered stretches follow at residues 746–765 (AAQG…RTGS), 842–892 (KRRG…KGDD), and 905–934 (LADR…AKRD). Residues 911-934 (RGPAKRPARKAARKVPAKKAAKRD) are compositionally biased toward basic residues.

The protein belongs to the type IA topoisomerase family. As to quaternary structure, monomer. The cofactor is Mg(2+).

The enzyme catalyses ATP-independent breakage of single-stranded DNA, followed by passage and rejoining.. Its function is as follows. Releases the supercoiling and torsional tension of DNA, which is introduced during the DNA replication and transcription, by transiently cleaving and rejoining one strand of the DNA duplex. Introduces a single-strand break via transesterification at a target site in duplex DNA. The scissile phosphodiester is attacked by the catalytic tyrosine of the enzyme, resulting in the formation of a DNA-(5'-phosphotyrosyl)-enzyme intermediate and the expulsion of a 3'-OH DNA strand. The free DNA strand then undergoes passage around the unbroken strand, thus removing DNA supercoils. Finally, in the religation step, the DNA 3'-OH attacks the covalent intermediate to expel the active-site tyrosine and restore the DNA phosphodiester backbone. The polypeptide is DNA topoisomerase 1 (Mycobacterium bovis (strain ATCC BAA-935 / AF2122/97)).